Consider the following 320-residue polypeptide: Phosphatidylserine decarboxylase proenzyme (320 aa).

Active-site charge relay system; for autoendoproteolytic cleavage activity residues include aspartate 90, histidine 147, and serine 254. Serine 254 (schiff-base intermediate with substrate; via pyruvic acid; for decarboxylase activity) is an active-site residue. Serine 254 is modified (pyruvic acid (Ser); by autocatalysis). Residues 290–320 (TAAAEPAPLPEEEIRAEHRASPLVDDKQDQG) are disordered. The span at 301–320 (EEIRAEHRASPLVDDKQDQG) shows a compositional bias: basic and acidic residues.

The protein belongs to the phosphatidylserine decarboxylase family. PSD-B subfamily. Prokaryotic type I sub-subfamily. Heterodimer of a large membrane-associated beta subunit and a small pyruvoyl-containing alpha subunit. Pyruvate is required as a cofactor. Is synthesized initially as an inactive proenzyme. Formation of the active enzyme involves a self-maturation process in which the active site pyruvoyl group is generated from an internal serine residue via an autocatalytic post-translational modification. Two non-identical subunits are generated from the proenzyme in this reaction, and the pyruvate is formed at the N-terminus of the alpha chain, which is derived from the carboxyl end of the proenzyme. The autoendoproteolytic cleavage occurs by a canonical serine protease mechanism, in which the side chain hydroxyl group of the serine supplies its oxygen atom to form the C-terminus of the beta chain, while the remainder of the serine residue undergoes an oxidative deamination to produce ammonia and the pyruvoyl prosthetic group on the alpha chain. During this reaction, the Ser that is part of the protease active site of the proenzyme becomes the pyruvoyl prosthetic group, which constitutes an essential element of the active site of the mature decarboxylase.

The protein resides in the cell membrane. It carries out the reaction a 1,2-diacyl-sn-glycero-3-phospho-L-serine + H(+) = a 1,2-diacyl-sn-glycero-3-phosphoethanolamine + CO2. The protein operates within phospholipid metabolism; phosphatidylethanolamine biosynthesis; phosphatidylethanolamine from CDP-diacylglycerol: step 2/2. Its function is as follows. Catalyzes the formation of phosphatidylethanolamine (PtdEtn) from phosphatidylserine (PtdSer). This chain is Phosphatidylserine decarboxylase proenzyme, found in Klebsiella pneumoniae subsp. pneumoniae (strain ATCC 700721 / MGH 78578).